Here is a 213-residue protein sequence, read N- to C-terminus: MRSKYIVIEGLEGAGKTTARNVVVETLEQLGIRDMVFTREPGGTQLAEKLRSLVLDIKSVGDEVITDKAEVLMFYAARVQLVETVIKPALANGTWVIGDRHDLSTQAYQGGGRGIDQHMLATLRDAVLGGFRPDLTLYLDVTPEVGLKRARARGELDRIEQESFDFFNRTRARYLELAAQDKSIHTIDATQPLEAVMDAIRTTVTNWVKELDA.

10 to 17 (GLEGAGKT) is a binding site for ATP.

The protein belongs to the thymidylate kinase family.

The catalysed reaction is dTMP + ATP = dTDP + ADP. In terms of biological role, phosphorylation of dTMP to form dTDP in both de novo and salvage pathways of dTTP synthesis. The protein is Thymidylate kinase of Escherichia coli O1:K1 / APEC.